A 385-amino-acid polypeptide reads, in one-letter code: ATP phosphoribosyltransferase regulatory subunit (385 aa).

This sequence belongs to the class-II aminoacyl-tRNA synthetase family. HisZ subfamily. As to quaternary structure, heteromultimer composed of HisG and HisZ subunits.

It localises to the cytoplasm. It participates in amino-acid biosynthesis; L-histidine biosynthesis; L-histidine from 5-phospho-alpha-D-ribose 1-diphosphate: step 1/9. In terms of biological role, required for the first step of histidine biosynthesis. May allow the feedback regulation of ATP phosphoribosyltransferase activity by histidine. This chain is ATP phosphoribosyltransferase regulatory subunit, found in Bordetella parapertussis (strain 12822 / ATCC BAA-587 / NCTC 13253).